A 716-amino-acid chain; its full sequence is DNA ligase (716 aa).

NAD(+) contacts are provided by residues 50–54, 99–100, and Glu132; these read DAEYD and SL. Lys134 functions as the N6-AMP-lysine intermediate in the catalytic mechanism. NAD(+) is bound by residues Arg155, Glu192, Lys308, and Lys332. Residues Cys437, Cys439, Cys461, and Cys467 each coordinate Zn(2+). A BRCT domain is found at 638-716; sequence KSNSAVAGKT…EDEWLKLIGE (79 aa).

It belongs to the NAD-dependent DNA ligase family. LigA subfamily. It depends on Mg(2+) as a cofactor. The cofactor is Mn(2+).

It catalyses the reaction NAD(+) + (deoxyribonucleotide)n-3'-hydroxyl + 5'-phospho-(deoxyribonucleotide)m = (deoxyribonucleotide)n+m + AMP + beta-nicotinamide D-nucleotide.. In terms of biological role, DNA ligase that catalyzes the formation of phosphodiester linkages between 5'-phosphoryl and 3'-hydroxyl groups in double-stranded DNA using NAD as a coenzyme and as the energy source for the reaction. It is essential for DNA replication and repair of damaged DNA. This is DNA ligase from Bradyrhizobium diazoefficiens (strain JCM 10833 / BCRC 13528 / IAM 13628 / NBRC 14792 / USDA 110).